The sequence spans 345 residues: Phenylalanine--tRNA ligase alpha subunit (345 aa).

Position 259 (Glu259) interacts with Mg(2+).

Belongs to the class-II aminoacyl-tRNA synthetase family. Phe-tRNA synthetase alpha subunit type 1 subfamily. In terms of assembly, tetramer of two alpha and two beta subunits. Mg(2+) is required as a cofactor.

It is found in the cytoplasm. The enzyme catalyses tRNA(Phe) + L-phenylalanine + ATP = L-phenylalanyl-tRNA(Phe) + AMP + diphosphate + H(+). This chain is Phenylalanine--tRNA ligase alpha subunit, found in Lactococcus lactis subsp. cremoris (strain SK11).